Consider the following 1369-residue polypeptide: DNA-directed RNA polymerase subunit beta' (1369 aa).

The tract at residues 1–26 (MTSSSPKTRKSSTKSKAKRGSKSKKA) is disordered. Positions 7-24 (KTRKSSTKSKAKRGSKSK) are enriched in basic residues. Zn(2+)-binding residues include Cys-253, Cys-320, Cys-327, and Cys-330. Residues 1294 to 1369 (TVDMPSSPVA…LQEEGLLSDE (76 aa)) form a disordered region. Over residues 1342 to 1351 (DDELSAEDQM) the composition is skewed to acidic residues. A compositionally biased stretch (low complexity) spans 1357–1369 (LEGLQEEGLLSDE).

It belongs to the RNA polymerase beta' chain family. RpoC2 subfamily. In cyanobacteria the RNAP catalytic core is composed of 2 alpha, 1 beta, 1 beta', 1 gamma and 1 omega subunit. When a sigma factor is associated with the core the holoenzyme is formed, which can initiate transcription. Zn(2+) is required as a cofactor.

The enzyme catalyses RNA(n) + a ribonucleoside 5'-triphosphate = RNA(n+1) + diphosphate. Functionally, DNA-dependent RNA polymerase catalyzes the transcription of DNA into RNA using the four ribonucleoside triphosphates as substrates. This is DNA-directed RNA polymerase subunit beta' from Prochlorococcus marinus (strain NATL2A).